A 220-amino-acid polypeptide reads, in one-letter code: Glutathione S-transferase-like protein FUS3 (220 aa).

A GST N-terminal domain is found at 3 to 84 (SFGTLYTYMP…YVAQSGPQAS (82 aa)). Residues 90 to 220 (DAMSSAKIRQ…LIEKRRIGAK (131 aa)) enclose the GST C-terminal domain.

This sequence belongs to the GST superfamily.

Functionally, glutathione S-transferase-like protein; part of the gene cluster that mediates the biosynthesis of the mycotoxin fusarin C. Within the cluster, FUS1, FUS2, FUS8 and FUS9 are sufficient for fusarin production. The other FUS cluster members are not essential for fusarin C biosynthesis. The chain is Glutathione S-transferase-like protein FUS3 from Gibberella moniliformis (strain M3125 / FGSC 7600) (Maize ear and stalk rot fungus).